The chain runs to 78 residues: DNA-directed RNA polymerase subunit Rpo5 (78 aa).

It belongs to the archaeal Rpo5/eukaryotic RPB5 RNA polymerase subunit family. As to quaternary structure, part of the RNA polymerase complex.

Its subcellular location is the cytoplasm. It carries out the reaction RNA(n) + a ribonucleoside 5'-triphosphate = RNA(n+1) + diphosphate. In terms of biological role, DNA-dependent RNA polymerase (RNAP) catalyzes the transcription of DNA into RNA using the four ribonucleoside triphosphates as substrates. This chain is DNA-directed RNA polymerase subunit Rpo5, found in Methanosarcina acetivorans (strain ATCC 35395 / DSM 2834 / JCM 12185 / C2A).